We begin with the raw amino-acid sequence, 265 residues long: MAQTMLLTSGVTAGHFLRNKSPLAQPKVHHLFLSGNSPVALPSRRQSFVPLALFKPKTKAAPKKVEKPKSKVEDGIFGTSGGIGFTKANELFVGRVAMIGFAASLLGEALTGKGILAQLNLETGIPIYEAEPLLLFFILFTLLGAIGALGDRGKFVDDPPTGLEKAVIPPGKNVRSALGLKEQGPLFGFTKANELFVGRLAQLGIAFSLIGEIITGKGALAQLNIETGIPIQDIEPLVLLNVAFFFFAAINPGNGKFITDDGEES.

A chloroplast-targeting transit peptide spans 1–59 (MAQTMLLTSGVTAGHFLRNKSPLAQPKVHHLFLSGNSPVALPSRRQSFVPLALFKPKTK). A run of 2 repeats spans residues 54-158 (FKPK…FVDD) and 159-264 (PPTG…DGEE). A run of 4 helical transmembrane segments spans residues 96–116 (VAMI…KGIL), 130–150 (AEPL…GALG), 195–215 (LFVG…EIIT), and 229–249 (IPIQ…FFAA).

Belongs to the ELIP/psbS family.

The protein localises to the plastid. The protein resides in the chloroplast thylakoid membrane. Its function is as follows. Plays an important role in non-photochemical quenching (NPQ), a process maintains the balance between dissipation and utilization of light energy to minimize generation of oxidizing molecules, thereby protecting the plant against photo-oxidative damage; acts upstream of DLDG1. Is not necessary for efficient light harvesting and photosynthesis. The protein is Photosystem II 22 kDa protein, chloroplastic of Arabidopsis thaliana (Mouse-ear cress).